The chain runs to 1216 residues: DNA polymerase subunit gamma-1 (1216 aa).

Low complexity predominate over residues 27-37; that stretch reads SSSVLDPVPSD. A disordered region spans residues 27 to 50; sequence SSSVLDPVPSDGQPQSQMPSSENG. A compositionally biased stretch (polar residues) spans 38–50; the sequence is GQPQSQMPSSENG. An Exo I motif is present at residues 179-183; it reads VFDVE. The active-site Exonuclease activity is the Asp181. The Exo II motif lies at 250–258; the sequence is VGHNVSFDR. Ser289 contributes to the DNA binding site. The segment covering 301–314 has biased composition (basic residues); the sequence is GKHKTQHPTKRGQK. Residues 301–321 are disordered; the sequence is GKHKTQHPTKRGQKSQKNANG. The short motif at 377 to 385 is the Exo III element; the sequence is YCARDVWAT. Positions 488–518 are disordered; sequence TASASKLPIEGAGPFGDPMDQEDPGPPSEEE. The accessory-interacting determinant stretch occupies residues 491-552; it reads ASKLPIEGAG…RPQHLPGHPG (62 aa). Acidic residues predominate over residues 506-518; it reads MDQEDPGPPSEEE. Arg560 provides a ligand contact to RNA. Ser574 lines the DNA pocket. RNA is bound by residues His731, Gly740, and Lys745. Residues Lys783 and Thr826 each contribute to the DNA site. The trigger loop stretch occupies residues 835–841; the sequence is TWLTASN. Ser840 and Arg846 together coordinate RNA. The short motif at 864–873 is the Pol A element; it reads VGADVDSQEL. A 2'-deoxyribonucleoside 5'-triphosphate-binding residues include Asp867, Val868, Ser870, Glu872, Arg920, Lys924, and Tyr928. The Mg(2+) site is built by Asp867 and Val868. Positions 920–935 match the Pol B motif; it reads REHAKVFNYGRIYGAG. DNA-binding residues include Thr1071 and Ser1072. The short motif at 1111–1118 is the Pol C element; it reads HDEVRYLV. Asp1112 is an a 2'-deoxyribonucleoside 5'-triphosphate binding site. Residue Asp1112 coordinates Mg(2+).

It belongs to the DNA polymerase type-A family. Heterotrimer composed of a catalytic subunit and a homodimer of accessory subunits (POLG:POLG2). Interacts with TTC3. Interacts with LIG3. Mg(2+) is required as a cofactor.

Its subcellular location is the mitochondrion. The protein localises to the mitochondrion matrix. It localises to the mitochondrion nucleoid. It catalyses the reaction DNA(n) + a 2'-deoxyribonucleoside 5'-triphosphate = DNA(n+1) + diphosphate. The enzyme catalyses a 3'-end 2'-deoxyribonucleotidyl-deoxyribonucleotide-DNA + H2O = a 3'-end 2'-deoxyribonucleotide-DNA + a 2'-deoxyribonucleoside 5'-phosphate + H(+). The catalysed reaction is a 5'-end 2'-deoxyribose-2'-deoxyribonucleotide-DNA = (2E,4S)-4-hydroxypenten-2-al-5-phosphate + a 5'-end 5'-phospho-2'-deoxyribonucleoside-DNA + H(+). Its activity is regulated as follows. Inhibited by dideoxynucleotides such as antiviral agent zalcitabine. Its function is as follows. Catalytic subunit of DNA polymerase gamma solely responsible for replication of mitochondrial DNA (mtDNA). Replicates both heavy and light strands of the circular mtDNA genome using a single-stranded DNA template, RNA primers and the four deoxyribonucleoside triphosphates as substrates. Has 5' -&gt; 3' polymerase activity. Functionally interacts with TWNK and SSBP1 at the replication fork to form a highly processive replisome, where TWNK unwinds the double-stranded DNA template prior to replication and SSBP1 covers the parental heavy strand to enable continuous replication of the entire mitochondrial genome. A single nucleotide incorporation cycle includes binding of the incoming nucleotide at the insertion site, a phosphodiester bond formation reaction that extends the 3'-end of the primer DNA, and translocation of the primer terminus to the post-insertion site. After completing replication of a mtDNA strand, mediates 3' -&gt; 5' exonucleolytic degradation at the nick to enable proper ligation. Highly accurate due to high nucleotide selectivity and 3' -&gt; 5' exonucleolytic proofreading. Proficiently corrects base substitutions, single-base additions and deletions in non-repetitive sequences and short repeats, but displays lower proofreading activity when replicating longer homopolymeric stretches. Exerts exonuclease activity toward single-stranded DNA and double-stranded DNA containing 3'-terminal mispairs. When a misincorporation occurs, transitions from replication to a pro-nucleolytic editing mode and removes the missincorporated nucleoside in the exonuclease active site. Proceeds via an SN2 nucleolytic mechanism in which Asp-198 catalyzes phosphodiester bond hydrolysis and Glu-200 stabilizes the leaving group. As a result the primer strand becomes one nucleotide shorter and is positioned in the post-insertion site, ready to resume DNA synthesis. Exerts 5'-deoxyribose phosphate (dRP) lyase activity and mediates repair-associated mtDNA synthesis (gap filling) in base-excision repair pathway. Catalyzes the release of the 5'-terminal 2-deoxyribose-5-phosphate sugar moiety from incised apurinic/apyrimidinic (AP) sites to produce a substrate for DNA ligase. The dRP lyase reaction does not require divalent metal ions and likely proceeds via a Schiff base intermediate in a beta-elimination reaction mechanism. This is DNA polymerase subunit gamma-1 from Rattus norvegicus (Rat).